The primary structure comprises 273 residues: 2,3,4,5-tetrahydropyridine-2,6-dicarboxylate N-succinyltransferase (273 aa).

Substrate-binding residues include Arg-104 and Asp-141.

This sequence belongs to the transferase hexapeptide repeat family. Homotrimer.

It is found in the cytoplasm. It carries out the reaction (S)-2,3,4,5-tetrahydrodipicolinate + succinyl-CoA + H2O = (S)-2-succinylamino-6-oxoheptanedioate + CoA. It participates in amino-acid biosynthesis; L-lysine biosynthesis via DAP pathway; LL-2,6-diaminopimelate from (S)-tetrahydrodipicolinate (succinylase route): step 1/3. This is 2,3,4,5-tetrahydropyridine-2,6-dicarboxylate N-succinyltransferase from Psychrobacter arcticus (strain DSM 17307 / VKM B-2377 / 273-4).